We begin with the raw amino-acid sequence, 49 residues long: Large ribosomal subunit protein eL40 (49 aa).

This sequence belongs to the eukaryotic ribosomal protein eL40 family.

The protein is Large ribosomal subunit protein eL40 of Methanosarcina barkeri (strain Fusaro / DSM 804).